The chain runs to 145 residues: Large ribosomal subunit protein uL15 (145 aa).

The interval 1–54 (MKLNELKYTPGSKKEATRVGRGMASGKGKTATRGHKGQNSRSGGGVRPGFEGGQ) is disordered. Positions 42-52 (SGGGVRPGFEG) are enriched in gly residues.

Belongs to the universal ribosomal protein uL15 family. Part of the 50S ribosomal subunit.

Binds to the 23S rRNA. In Mycoplasma capricolum subsp. capricolum (strain California kid / ATCC 27343 / NCTC 10154), this protein is Large ribosomal subunit protein uL15.